Consider the following 364-residue polypeptide: Replication-associated protein (364 aa).

The CRESS-DNA virus Rep endonuclease domain occupies 17–120 (KHRNVNTFLT…PVTYWERGTF (104 aa)). Positions 24–27 (FLTY) match the RCR-1 motif. A divalent metal cation is bound by residues Glu-58, His-66, and His-68. Residues 66 to 68 (HIH) carry the RCR-2 motif. Residue Tyr-106 is the For DNA cleavage activity of the active site. Residues 106–109 (YAMK) carry the RCR-3 motif. Position 110 (Asn-110) interacts with a divalent metal cation. The segment at 180 to 192 (SANKLFPDIQEIY) is oligomerization. 234 to 241 (GPTRTGKS) contacts ATP. The tract at residues 257 to 275 (VDWSSYDEDAEYNIIDDIP) is transactivation. The Nuclear localization signal signature appears at 297–308 (KYGKRKKVASKS).

This sequence belongs to the geminiviridae Rep protein family. As to quaternary structure, homooligomer. Rep binds to repeated DNA motifs (iterons). Forms the O-complex, which is a Rep-DNA complex involved in the initiation of RCR. Part of the C- and V-complexes which are RepA-Rep-DNA complexes involved in the c-sense and v-sense transcription. Mg(2+) serves as cofactor. It depends on Mn(2+) as a cofactor.

It is found in the host nucleus. Its function is as follows. Essential for the replication of viral ssDNA. The closed circular ssDNA genome is first converted to a superhelical dsDNA. Rep binds a specific region at the genome origin of replication. It introduces an endonucleolytic nick within the conserved sequence 5'-TAATATTAC-3' in the intergenic region of the genome present in all geminiviruses, thereby initiating the rolling circle replication (RCR). Following cleavage, binds covalently to the 5'-phosphate of DNA as a tyrosyl ester. The cleavage gives rise to a free 3'-OH that serves as a primer for the cellular DNA polymerase. The polymerase synthesizes the (+) strand DNA by rolling circle mechanism. After one round of replication, a Rep-catalyzed nucleotidyl transfer reaction releases a circular single-stranded virus genome, thereby terminating the replication. Displays origin-specific DNA cleavage, nucleotidyl transferase, ATPase and helicase activities. Acts as an inhibitor of C-sense gene transcription. The sequence is that of Replication-associated protein from Sugarcane streak virus (isolate South Africa) (SSV).